Consider the following 265-residue polypeptide: Small ribosomal subunit protein eS4 (265 aa).

Residues 42-104 (LPLILIIRNR…TNENYRLLYD (63 aa)) form the S4 RNA-binding domain.

It belongs to the eukaryotic ribosomal protein eS4 family.

Its subcellular location is the cytoplasm. The chain is Small ribosomal subunit protein eS4 (RPS4) from Zea mays (Maize).